The following is a 237-amino-acid chain: Lectin alpha chain (237 aa).

The Mn(2+) site is built by Glu-8 and Asp-10. Asp-10, Tyr-12, Asn-14, and Asp-19 together coordinate Ca(2+). Tyr-12 lines the a carbohydrate pocket. Mn(2+) contacts are provided by Asp-19, His-24, and Ser-34. A carbohydrate is bound at residue 99 to 100 (LY). Residue Asp-208 coordinates Ca(2+). Residue Arg-228 coordinates a carbohydrate.

This sequence belongs to the leguminous lectin family. As to quaternary structure, homotetramer. In terms of processing, the beta and gamma chains are produced by partial proteolytic processing of the lectin alpha chain by an asparaginyl endopeptidase. Mixture of 60% alpha lectin and 40% of its beta and gamma proteolytic fragments.

Its function is as follows. D-mannose/D-glucose-binding lectin. Has anti-inflammatory activity in rats. Induces histamine release in mast cells from rat. Induces lymphocyte proliferation and IFNG production. Shows toxicity against the aquatic snail B.glabrata at concentrations higher than 50 ug/ml. This chain is Lectin alpha chain, found in Dioclea grandiflora (Mucana).